Consider the following 76-residue polypeptide: Anaredoxin (76 aa).

One can recognise an HNH domain in the interval 24–66; the sequence is CMVCWEVNSKANGHHLIPYSEGGSADIQNMMTLCPSCHTKYHK.

Belongs to the HNH nuclease family.

Its function is as follows. Putative P-450 reductase. In Nostoc sp. (strain PCC 7120 / SAG 25.82 / UTEX 2576), this protein is Anaredoxin.